Here is a 493-residue protein sequence, read N- to C-terminus: Cytochrome P450 2E1 (493 aa).

Substrate is bound at residue 298 to 303; it reads FAGTET. Heme is bound at residue cysteine 437.

The protein belongs to the cytochrome P450 family. Interacts with chaperones HSP70 and HSP90; this interaction is required for initial targeting to mitochondria. It depends on heme as a cofactor.

It localises to the endoplasmic reticulum membrane. Its subcellular location is the microsome membrane. It is found in the mitochondrion inner membrane. The enzyme catalyses an organic molecule + reduced [NADPH--hemoprotein reductase] + O2 = an alcohol + oxidized [NADPH--hemoprotein reductase] + H2O + H(+). The catalysed reaction is (5Z,8Z,11Z)-eicosatrienoate + reduced [NADPH--hemoprotein reductase] + O2 = 19-hydroxy-(5Z,8Z,11Z)-eicosatrienoate + oxidized [NADPH--hemoprotein reductase] + H2O + H(+). It catalyses the reaction (5Z,8Z,11Z,14Z,17Z)-eicosapentaenoate + reduced [NADPH--hemoprotein reductase] + O2 = 19-hydroxy-(5Z,8Z,11Z,14Z,17Z)-eicosapentaenoate + oxidized [NADPH--hemoprotein reductase] + H2O + H(+). It carries out the reaction (4Z,7Z,10Z,13Z,16Z,19Z)-docosahexaenoate + reduced [NADPH--hemoprotein reductase] + O2 = 21-hydroxy-(4Z,7Z,10Z,13Z,16Z,19Z)-docosahexaenoate + oxidized [NADPH--hemoprotein reductase] + H2O + H(+). The enzyme catalyses dodecanoate + reduced [NADPH--hemoprotein reductase] + O2 = 11-hydroxydodecanoate + oxidized [NADPH--hemoprotein reductase] + H2O + H(+). The catalysed reaction is tetradecanoate + reduced [NADPH--hemoprotein reductase] + O2 = 13-hydroxytetradecanoate + oxidized [NADPH--hemoprotein reductase] + H2O + H(+). It catalyses the reaction 4-nitrophenol + NADPH + O2 + H(+) = 4-nitrocatechol + NADP(+) + H2O. Its pathway is lipid metabolism; fatty acid metabolism. Its activity is regulated as follows. The omega-1 hydroxylase activity is stimulated by cytochrome b5. A cytochrome P450 monooxygenase involved in the metabolism of fatty acids. Mechanistically, uses molecular oxygen inserting one oxygen atom into a substrate, and reducing the second into a water molecule, with two electrons provided by NADPH via cytochrome P450 reductase (NADPH--hemoprotein reductase). Catalyzes the hydroxylation of carbon-hydrogen bonds. Hydroxylates fatty acids specifically at the omega-1 position displaying the highest catalytic activity for saturated fatty acids. May be involved in the oxidative metabolism of xenobiotics. In Oryctolagus cuniculus (Rabbit), this protein is Cytochrome P450 2E1 (CYP2E1).